We begin with the raw amino-acid sequence, 671 residues long: Probable potassium transport system protein Kup 2 (671 aa).

12 helical membrane-spanning segments follow: residues 18–38 (GFLIALGIVYGDIGTSPLYAM), 60–80 (VSLVIWTLTLITTVKYVLIAL), 103–123 (WLIIPAMIGGATLLADGALTP), 146–166 (AVMVTTLIILAFLFLIQRFGA), 173–193 (FGPIMFIWFGFLGVSGLINSF), 218–238 (AGFFILGSIFLVTTGAEALYS), 252–272 (WPFVKICIILSYCGQGAWLLA), 292–312 (MVIYVVILSTLAAIIASQALI), 343–363 (LYIPAVNFALWVTTSFFVLYF), 373–393 (YSLAITITMLMTTTLLTYFLI), 402–422 (IAIISIGLFCIEGSFFAASLV), and 424–444 (FINGAYIVVLIALAIIFVMFI).

This sequence belongs to the HAK/KUP transporter (TC 2.A.72) family.

It localises to the cell membrane. The catalysed reaction is K(+)(in) + H(+)(in) = K(+)(out) + H(+)(out). Functionally, transport of potassium into the cell. Likely operates as a K(+):H(+) symporter. The protein is Probable potassium transport system protein Kup 2 of Lactococcus lactis subsp. lactis (strain IL1403) (Streptococcus lactis).